Reading from the N-terminus, the 145-residue chain is Peptide methionine sulfoxide reductase MsrB (145 aa).

Residues Lys-6 to Val-129 form the MsrB domain. Catalysis depends on Cys-118, which acts as the Nucleophile.

Belongs to the MsrB Met sulfoxide reductase family.

It catalyses the reaction L-methionyl-[protein] + [thioredoxin]-disulfide + H2O = L-methionyl-(R)-S-oxide-[protein] + [thioredoxin]-dithiol. The protein is Peptide methionine sulfoxide reductase MsrB of Listeria monocytogenes serovar 1/2a (strain ATCC BAA-679 / EGD-e).